Consider the following 509-residue polypeptide: Glycogen synthase (509 aa).

K47 provides a ligand contact to ADP-alpha-D-glucose.

This sequence belongs to the glycosyltransferase 1 family. Bacterial/plant glycogen synthase subfamily.

The enzyme catalyses [(1-&gt;4)-alpha-D-glucosyl](n) + ADP-alpha-D-glucose = [(1-&gt;4)-alpha-D-glucosyl](n+1) + ADP + H(+). The protein operates within glycan biosynthesis; glycogen biosynthesis. Its function is as follows. Synthesizes alpha-1,4-glucan chains using ADP-glucose. The protein is Glycogen synthase of Xanthomonas oryzae pv. oryzae (strain PXO99A).